The sequence spans 258 residues: Acyl-[acyl-carrier-protein]--UDP-N-acetylglucosamine O-acyltransferase (258 aa).

Belongs to the transferase hexapeptide repeat family. LpxA subfamily. In terms of assembly, homotrimer.

It is found in the cytoplasm. The catalysed reaction is a (3R)-hydroxyacyl-[ACP] + UDP-N-acetyl-alpha-D-glucosamine = a UDP-3-O-[(3R)-3-hydroxyacyl]-N-acetyl-alpha-D-glucosamine + holo-[ACP]. Its pathway is glycolipid biosynthesis; lipid IV(A) biosynthesis; lipid IV(A) from (3R)-3-hydroxytetradecanoyl-[acyl-carrier-protein] and UDP-N-acetyl-alpha-D-glucosamine: step 1/6. Functionally, involved in the biosynthesis of lipid A, a phosphorylated glycolipid that anchors the lipopolysaccharide to the outer membrane of the cell. The chain is Acyl-[acyl-carrier-protein]--UDP-N-acetylglucosamine O-acyltransferase from Thermodesulfovibrio yellowstonii (strain ATCC 51303 / DSM 11347 / YP87).